The following is a 274-amino-acid chain: Rhamnulose-1-phosphate aldolase (274 aa).

The active site involves Glu-117. 3 residues coordinate Zn(2+): His-141, His-143, and His-212.

The protein belongs to the aldolase class II family. RhaD subfamily. Homotetramer. It depends on Zn(2+) as a cofactor.

The protein localises to the cytoplasm. It carries out the reaction L-rhamnulose 1-phosphate = (S)-lactaldehyde + dihydroxyacetone phosphate. It functions in the pathway carbohydrate degradation; L-rhamnose degradation; glycerone phosphate from L-rhamnose: step 3/3. In terms of biological role, catalyzes the reversible cleavage of L-rhamnulose-1-phosphate to dihydroxyacetone phosphate (DHAP) and L-lactaldehyde. In Escherichia coli O7:K1 (strain IAI39 / ExPEC), this protein is Rhamnulose-1-phosphate aldolase.